A 406-amino-acid polypeptide reads, in one-letter code: Glutamyl-tRNA(Gln) amidotransferase subunit D (406 aa).

Residues Lys68–Asn390 enclose the Asparaginase/glutaminase domain. Active-site residues include Thr78, Thr152, Asp153, and Lys230.

This sequence belongs to the asparaginase 1 family. GatD subfamily. Heterodimer of GatD and GatE.

The catalysed reaction is L-glutamyl-tRNA(Gln) + L-glutamine + ATP + H2O = L-glutaminyl-tRNA(Gln) + L-glutamate + ADP + phosphate + H(+). Allows the formation of correctly charged Gln-tRNA(Gln) through the transamidation of misacylated Glu-tRNA(Gln) in organisms which lack glutaminyl-tRNA synthetase. The reaction takes place in the presence of glutamine and ATP through an activated gamma-phospho-Glu-tRNA(Gln). The GatDE system is specific for glutamate and does not act on aspartate. The protein is Glutamyl-tRNA(Gln) amidotransferase subunit D of Thermoplasma volcanium (strain ATCC 51530 / DSM 4299 / JCM 9571 / NBRC 15438 / GSS1).